The following is an 804-amino-acid chain: MRVLWVLGLCCVLLTFGFVRADDEVDVDGTVEEDLGKSREGSRTDDEVVQREEEAIQLDGLNASQIRELREKSEKFAFQAEVNRMMKLIINSLYKNKEIFLRELISNASDALDKIRLISLTDENALAGNEELTVKIKCDREKNLLHVTDTGVGMTREELVKNLGTIAKSGTSEFLNKMTEAQEDGQSTSELIGQFGVGFYSAFLVADKVIVTSKHNNDTQHIWESDSNEFSVIADPRGNTLGRGTTITLVLKEEASDYLELDTIKNLVRKYSQFINFPIYVWSSKTETVEEPLEEDETAQEEKEEADDEAAVEEEEEEKKPKTKKVEKTVWDWELMNDIKPIWQRPSKEVEEDEYKAFYKSFSKESDDPMAYIHFTAEGEVTFKSILFVPTSAPRGLFDEYGSKKSDYIKLYVRRVFITDDFHDMMPKYLNFVKGVVDSDDLPLNVSRETLQQHKLLKVIRKKLVRKTLDMIKKIADEKYNDTFWKEFGTNIKLGVIEDHSNRTRLAKLLRFQSSHHSTDITSLDQYVERMKEKQDKIYFMAGSSRKEAESSPFVERLLKKGYEVIYLTEPVDEYCIQALPEFDGKRFQNVAKEGVKFDESEKSKESREATEKEFEPLLNWMKDKALKDKIEKAVVSQRLTESPCALVASQYGWSGNMERIMKAQAYQTGKDISTNYYASQKKTFEINPRHPLIRDMLRRVKEDEDDKTVMDLAVVLFETATLRSGYLLPDTKAYGDRIERMLRLSLNIDPEAQVEEEPEEEPEDTTEDTTDDSEQDEEETDAGAEEEEEEQETEKEPTEKDEL.

Positions 1–21 (MRVLWVLGLCCVLLTFGFVRA) are cleaved as a signal peptide. Residues 42-44 (SRT) carry the SRT pseudosubstrate motif motif. Asn62 carries N-linked (GlcNAc...) asparagine glycosylation. The residue at position 64 (Ser64) is a Phosphoserine. Asn107 is a glycosylation site (N-linked (GlcNAc...) asparagine). ATP-binding residues include Asn107, Asp149, and Asn162. Lys168 carries the N6-(2-hydroxyisobutyryl)lysine modification. Ser172 bears the Phosphoserine mark. Phe199 is a binding site for ATP. A glycan (N-linked (GlcNAc...) asparagine) is linked at Asn217. Positions 288–323 (TVEEPLEEDETAQEEKEEADDEAAVEEEEEEKKPKT) are disordered. Residues 289 to 317 (VEEPLEEDETAQEEKEEADDEAAVEEEEE) are compositionally biased toward acidic residues. Ser403 is subject to Phosphoserine. N6-succinyllysine is present on Lys404. An N-linked (GlcNAc...) asparagine glycan is attached at Asn445. Ser447 bears the Phosphoserine mark. Lys479 bears the N6-acetyllysine mark. N-linked (GlcNAc...) asparagine glycosylation is found at Asn481 and Asn502. N6-succinyllysine is present on Lys633. Residues 749-804 (IDPEAQVEEEPEEEPEDTTEDTTDDSEQDEEETDAGAEEEEEEQETEKEPTEKDEL) are disordered. Residues 753 to 794 (AQVEEEPEEEPEDTTEDTTDDSEQDEEETDAGAEEEEEEQET) are compositionally biased toward acidic residues. Positions 795-804 (EKEPTEKDEL) are enriched in basic and acidic residues. The short motif at 801 to 804 (KDEL) is the Prevents secretion from ER element.

It belongs to the heat shock protein 90 family. Homodimer; disulfide-linked. Component of an EIF2 complex at least composed of CELF1/CUGBP1, CALR, CALR3, EIF2S1, EIF2S2, HSP90B1 and HSPA5. Part of a large chaperone multiprotein complex comprising DNAJB11, HSP90B1, HSPA5, HYOU, PDIA2, PDIA4, PDIA6, PPIB, SDF2L1, UGGT1 and very small amounts of ERP29, but not, or at very low levels, CALR nor CANX. Interacts with AIMP1; regulates its retention in the endoplasmic reticulum. Hyperglycosylated form interacts with OS9; promoting its degradation by the endoplasmic reticulum associated degradation (ERAD). Interacts with CNPY3. This interaction is disrupted in the presence of ATP. Interacts with TLR4 and TLR9, but not with TLR3. Interacts with MZB1 in a calcium-dependent manner. Interacts with METTL23. Interacts with IL1B; the interaction facilitates cargo translocation into the ERGIC. Interacts with EIF2AK3. Phosphorylated by CK2. In terms of processing, N-glycosylated cotranslationally at Asn-217 by STT3A-containing OST-A complex: this glycosylation is constitutive. In response to various stress, 5 additional facultative sites (Asn-62, Asn-107, Asn-445, Asn-481 and Asn-502) can be glycosylated post-translationally by STT3B-containing OST-B complex, leading to a hyperglycosylated form that is degraded by the ER-associated degradation (ERAD) pathway. In normal conditions, the OST-A complex together with CCDC134 prevent glycosylation at facultative sites during protein folding, thereby preventing hyperglycosylation. Mechanistically, nascent HSP90B1 is tethered during translation to a specialized CCDC134-containing translocon that forms a microenvironment for its folding, in which STT3A associates with the SRT pseudosubstrate motif, and prevents access to facultative glycosylation sites until folding is completed, rendering its facultative sites inaccessible to the OST-B complex.

The protein resides in the endoplasmic reticulum lumen. Its subcellular location is the sarcoplasmic reticulum lumen. It localises to the melanosome. It catalyses the reaction ATP + H2O = ADP + phosphate + H(+). In terms of biological role, ATP-dependent chaperone involved in the processing of proteins in the endoplasmic reticulum, regulating their transport. Together with MESD, acts as a modulator of the Wnt pathway by promoting the folding of LRP6, a coreceptor of the canonical Wnt pathway. When associated with CNPY3, required for proper folding of Toll-like receptors. Promotes folding and trafficking of TLR4 to the cell surface. May participate in the unfolding of cytosolic leaderless cargos (lacking the secretion signal sequence) such as the interleukin 1/IL-1 to facilitate their translocation into the ERGIC (endoplasmic reticulum-Golgi intermediate compartment) and secretion; the translocation process is mediated by the cargo receptor TMED10. This is Endoplasmin from Rattus norvegicus (Rat).